A 493-amino-acid chain; its full sequence is Desmethylyatein synthase (493 aa).

Residues 1-21 traverse the membrane as a helical segment; sequence METFQCLTLFLLFISTVFILK. A heme-binding site is contributed by C434.

Belongs to the cytochrome P450 family. It depends on heme as a cofactor.

It localises to the membrane. It carries out the reaction (-)-bursehernin + reduced [NADPH--hemoprotein reductase] + O2 = (-)-5'-demethylyatein + oxidized [NADPH--hemoprotein reductase] + H2O + H(+). The protein operates within aromatic compound metabolism; phenylpropanoid biosynthesis. Its function is as follows. Cytochrome P450 involved in the biosynthesis of etoposide, a chemotherapeutic compound of the topoisomerase inhibitor family. Catalyzes the conversion of bursehernin to demethylyatein. The polypeptide is Desmethylyatein synthase (Sinopodophyllum hexandrum (Himalayan may apple)).